Reading from the N-terminus, the 243-residue chain is Transmembrane protein 174 (243 aa).

The next 2 membrane-spanning stretches (helical) occupy residues 40–60 (LLFSGIFLGLVGITFTVMGWI) and 73–93 (LLGPVLLSVGVTFILIAVCKF).

In terms of assembly, interacts with SLC34A1; regulates SLC34A1 internalization by PTH and FGF23.

The protein resides in the endoplasmic reticulum membrane. The protein localises to the apical cell membrane. Functionally, regulator of plasma phosphate homeostasis. Decreases serum inorganic phosphate (Pi) uptake by regulating the sodium-phosphate cotransporter SLC34A1 trafficking by PTH and FGF23 in the kidney. The polypeptide is Transmembrane protein 174 (TMEM174) (Pongo abelii (Sumatran orangutan)).